We begin with the raw amino-acid sequence, 607 residues long: Elongation factor 4 (607 aa).

The 183-residue stretch at 11–193 (EKIRNFSIIA…QIVEKVPAPT (183 aa)) folds into the tr-type G domain. GTP-binding positions include 23–28 (DHGKST) and 140–143 (NKID).

Belongs to the TRAFAC class translation factor GTPase superfamily. Classic translation factor GTPase family. LepA subfamily.

The protein localises to the cell membrane. It catalyses the reaction GTP + H2O = GDP + phosphate + H(+). Functionally, required for accurate and efficient protein synthesis under certain stress conditions. May act as a fidelity factor of the translation reaction, by catalyzing a one-codon backward translocation of tRNAs on improperly translocated ribosomes. Back-translocation proceeds from a post-translocation (POST) complex to a pre-translocation (PRE) complex, thus giving elongation factor G a second chance to translocate the tRNAs correctly. Binds to ribosomes in a GTP-dependent manner. This is Elongation factor 4 from Streptococcus gordonii (strain Challis / ATCC 35105 / BCRC 15272 / CH1 / DL1 / V288).